Consider the following 250-residue polypeptide: Pyrroloquinoline-quinone synthase (250 aa).

The protein belongs to the PqqC family.

The catalysed reaction is 6-(2-amino-2-carboxyethyl)-7,8-dioxo-1,2,3,4,7,8-hexahydroquinoline-2,4-dicarboxylate + 3 O2 = pyrroloquinoline quinone + 2 H2O2 + 2 H2O + H(+). It participates in cofactor biosynthesis; pyrroloquinoline quinone biosynthesis. Its function is as follows. Ring cyclization and eight-electron oxidation of 3a-(2-amino-2-carboxyethyl)-4,5-dioxo-4,5,6,7,8,9-hexahydroquinoline-7,9-dicarboxylic-acid to PQQ. The protein is Pyrroloquinoline-quinone synthase of Pseudomonas aeruginosa (strain LESB58).